Consider the following 338-residue polypeptide: Putative transposase for insertion sequence element IS4SA (338 aa).

The protein belongs to the transposase 11 family.

This is Putative transposase for insertion sequence element IS4SA from Synechocystis sp. (strain ATCC 27184 / PCC 6803 / Kazusa).